The following is a 119-amino-acid chain: MTLEAYFPVLIFIIFGVVLGIALMSIGRILGPNKPDPAKLSPYECGFEAFEDARMKFDVRYYLIAILFILFDLETAFLFPWGVALREIGWPGFIAMGVFLLEFIVGFVYIWKKGALDWE.

3 helical membrane passes run 7-27, 63-83, and 88-108; these read FPVL…MSIG, LIAI…PWGV, and IGWP…VGFV.

The protein belongs to the complex I subunit 3 family. As to quaternary structure, NDH-1 is composed of 14 different subunits. Subunits NuoA, H, J, K, L, M, N constitute the membrane sector of the complex.

The protein localises to the cell inner membrane. The catalysed reaction is a quinone + NADH + 5 H(+)(in) = a quinol + NAD(+) + 4 H(+)(out). NDH-1 shuttles electrons from NADH, via FMN and iron-sulfur (Fe-S) centers, to quinones in the respiratory chain. The immediate electron acceptor for the enzyme in this species is believed to be ubiquinone. Couples the redox reaction to proton translocation (for every two electrons transferred, four hydrogen ions are translocated across the cytoplasmic membrane), and thus conserves the redox energy in a proton gradient. The protein is NADH-quinone oxidoreductase subunit A of Cupriavidus pinatubonensis (strain JMP 134 / LMG 1197) (Cupriavidus necator (strain JMP 134)).